We begin with the raw amino-acid sequence, 317 residues long: Small ribosomal subunit protein uS2 (317 aa).

A disordered region spans residues 277–317 (SDWTAPAANPANAAAAGAPAPAPAAATTTESWGGSGAENWG). Residues 281-302 (APAANPANAAAAGAPAPAPAAA) are compositionally biased toward low complexity.

It belongs to the universal ribosomal protein uS2 family. Component of the small ribosomal subunit. Mature ribosomes consist of a small (40S) and a large (60S) subunit. The 40S subunit contains about 33 different proteins and 1 molecule of RNA (18S). The 60S subunit contains about 49 different proteins and 3 molecules of RNA (28S, 5.8S and 5S). Interacts with ribosomal protein S21.

It localises to the cytoplasm. In terms of biological role, required for the assembly and/or stability of the 40S ribosomal subunit. Required for the processing of the 20S rRNA-precursor to mature 18S rRNA in a late step of the maturation of 40S ribosomal subunits. This Urechis caupo (Innkeeper worm) protein is Small ribosomal subunit protein uS2.